A 467-amino-acid chain; its full sequence is MLSTKTLPSSKAQESLQSPTKGSYWITTFGCQMNKADSERMAGILERMGYKQAEEELQADLVLYNTCTIRDNAEQKVYSYLGRQALRKKLFPQLKLIVAGCVAQQEGESLLRRVPELDLVMGPQHANRLETLLNKVETGQQVLATEELYIIEDLTTARRDSSICAWVNVIYGCNERCTYCVVPSVRGKEQSRTPPAIKREIENLANTGFKEVTLLGQNIDAYGRDLPGTTPQGRKKNTLTDLLYYIHDIEGIERIRFATSHPRYFTSRLIEACAELPKVCEHFHIPFQSGDDEILNQMRRGYKIKTYKKIIGRIRELMPNASITADVIVAFPGETNEQFQRSLSLVEEIGFDQLNTAAYSPRPNTPAALWPNQIPEEIKIERLRKLNSLVEIKAKERNVRYKDRVEEVLAENTNPKDKQQLMGRTRTNRLTFFPKVDNQGNSYKPGDLVKVRVKDIRAFSLSGVIEN.

The MTTase N-terminal domain occupies 22 to 138; the sequence is GSYWITTFGC…LETLLNKVET (117 aa). The [4Fe-4S] cluster site is built by cysteine 31, cysteine 67, cysteine 101, cysteine 173, cysteine 177, and cysteine 180. Residues 159 to 396 enclose the Radical SAM core domain; it reads RDSSICAWVN…NSLVEIKAKE (238 aa). Positions 399–467 constitute a TRAM domain; the sequence is VRYKDRVEEV…AFSLSGVIEN (69 aa).

This sequence belongs to the methylthiotransferase family. MiaB subfamily. Monomer. The cofactor is [4Fe-4S] cluster.

The protein resides in the cytoplasm. The catalysed reaction is N(6)-dimethylallyladenosine(37) in tRNA + (sulfur carrier)-SH + AH2 + 2 S-adenosyl-L-methionine = 2-methylsulfanyl-N(6)-dimethylallyladenosine(37) in tRNA + (sulfur carrier)-H + 5'-deoxyadenosine + L-methionine + A + S-adenosyl-L-homocysteine + 2 H(+). Functionally, catalyzes the methylthiolation of N6-(dimethylallyl)adenosine (i(6)A), leading to the formation of 2-methylthio-N6-(dimethylallyl)adenosine (ms(2)i(6)A) at position 37 in tRNAs that read codons beginning with uridine. The polypeptide is tRNA-2-methylthio-N(6)-dimethylallyladenosine synthase (Prochlorococcus marinus (strain MIT 9211)).